Reading from the N-terminus, the 95-residue chain is MKISKEEVKHIAMLSRLELNEEEIGVYQEQLSRILDYIEKLNEIDTTLVEPTSHVIELKNVFRDDNVKGSISRDEALKNAPDQTDKFFRVPKIIE.

Belongs to the GatC family. In terms of assembly, heterotrimer of A, B and C subunits.

The catalysed reaction is L-glutamyl-tRNA(Gln) + L-glutamine + ATP + H2O = L-glutaminyl-tRNA(Gln) + L-glutamate + ADP + phosphate + H(+). It catalyses the reaction L-aspartyl-tRNA(Asn) + L-glutamine + ATP + H2O = L-asparaginyl-tRNA(Asn) + L-glutamate + ADP + phosphate + 2 H(+). Allows the formation of correctly charged Asn-tRNA(Asn) or Gln-tRNA(Gln) through the transamidation of misacylated Asp-tRNA(Asn) or Glu-tRNA(Gln) in organisms which lack either or both of asparaginyl-tRNA or glutaminyl-tRNA synthetases. The reaction takes place in the presence of glutamine and ATP through an activated phospho-Asp-tRNA(Asn) or phospho-Glu-tRNA(Gln). The chain is Aspartyl/glutamyl-tRNA(Asn/Gln) amidotransferase subunit C from Thermodesulfovibrio yellowstonii (strain ATCC 51303 / DSM 11347 / YP87).